The following is a 351-amino-acid chain: Heat-inducible transcription repressor HrcA (351 aa).

This sequence belongs to the HrcA family.

In terms of biological role, negative regulator of class I heat shock genes (grpE-dnaK-dnaJ and groELS operons). Prevents heat-shock induction of these operons. The sequence is that of Heat-inducible transcription repressor HrcA from Mycoplasma pneumoniae (strain ATCC 29342 / M129 / Subtype 1) (Mycoplasmoides pneumoniae).